The sequence spans 325 residues: WUSCHEL-related homeobox 8 (325 aa).

Positions Asp-51–Leu-115 form a DNA-binding region, homeobox; WUS-type.

Belongs to the WUS homeobox family. Expressed only in the egg cell. Not detected in the pollen tube. Expressed in the zygote, the basal cell, and later the suspensor. Expressed in all suspensor cells, except the hypophysis, and in the embryo surrounding region (ESR) endosperm cells. Strongly expressed in the suspensor cells, with a weak expression also detected throughout the developing embryo.

Its subcellular location is the nucleus. Functionally, probable transcription factor, which may be involved in embryonic patterning. May be required for basal embryo development after fertilization. Acts partially redundantly with STIP in promoting embryonic cell division and proliferation. Promotes cotyledon boundary formation by maintaining the symmetry in CUC genes expression domains. This Arabidopsis thaliana (Mouse-ear cress) protein is WUSCHEL-related homeobox 8.